Reading from the N-terminus, the 391-residue chain is GTPase Obg (391 aa).

Residues 1–159 form the Obg domain; it reads MKFIDEALIR…RDLLLELMLL (159 aa). One can recognise an OBG-type G domain in the interval 160-333; that stretch reads ADVGMLGLPN…LTRDIMDFIE (174 aa). Residues 166 to 173, 191 to 195, 213 to 216, 283 to 286, and 314 to 316 contribute to the GTP site; these read GLPNAGKS, FTTLV, DIPG, NKID, and SAA. Mg(2+) is bound by residues serine 173 and threonine 193.

It belongs to the TRAFAC class OBG-HflX-like GTPase superfamily. OBG GTPase family. Monomer. The cofactor is Mg(2+).

It is found in the cytoplasm. In terms of biological role, an essential GTPase which binds GTP, GDP and possibly (p)ppGpp with moderate affinity, with high nucleotide exchange rates and a fairly low GTP hydrolysis rate. Plays a role in control of the cell cycle, stress response, ribosome biogenesis and in those bacteria that undergo differentiation, in morphogenesis control. The sequence is that of GTPase Obg from Haemophilus ducreyi (strain 35000HP / ATCC 700724).